Here is a 218-residue protein sequence, read N- to C-terminus: UPF0319 protein swp_2242 (218 aa).

Residues 1–21 (MRLSQSVLTALLICVNSAAFA) form the signal peptide.

It belongs to the UPF0319 family.

The sequence is that of UPF0319 protein swp_2242 from Shewanella piezotolerans (strain WP3 / JCM 13877).